The chain runs to 902 residues: Respiratory burst oxidase homolog protein A (902 aa).

The Cytoplasmic portion of the chain corresponds to 1–344 (MMNRSEMQKL…KYFLFDNWKR (344 aa)). Disordered stretches follow at residues 63–87 (KSPNHRGAGSNYEDQSLLRQGRSGR) and 107–130 (ASSVSSSSARKPPRPQLAKLRRSK). The span at 74-87 (YEDQSLLRQGRSGR) shows a compositional bias: polar residues. The span at 107 to 116 (ASSVSSSSAR) shows a compositional bias: low complexity. EF-hand-like regions lie at residues 163–173 (TMTTNGLLHRS) and 198–209 (ENVSGDSININE). 2 EF-hand domains span residues 221-256 (DFDSRLRTFFAMVDKDSDGRLNEAEVREIITLSASA) and 265-300 (QADEYAALIMEELDPYHYGYIMIENLEILLLQAPMQ). Ca(2+) contacts are provided by D234, D236, D238, R240, and E245. S311 and S315 each carry phosphoserine. Residues 345-365 (VWVMALWIGAMAGLFTWKFME) traverse the membrane as a helical segment. Topologically, residues 366–380 (YRKRSAYEVMGVCVC) are extracellular. The chain crosses the membrane as a helical span at residues 381–401 (IAKGAAETLKLNMAMILLPVC). Positions 383–540 (KGAAETLKLN…LFVIVYSLLV (158 aa)) constitute a Ferric oxidoreductase domain. Topologically, residues 402–428 (RNTITWLRTKTKLSAIVPFDDSLNFHK) are cytoplasmic. The helical transmembrane segment at 429 to 449 (VIAIGISVGVGIHATSHLACD) threads the bilayer. The Extracellular segment spans residues 450 to 484 (FPRLIAADEDQYEPMEKYFGPQTKRYLDFVQSVEG). A helical membrane pass occupies residues 485–505 (VTGIGMVVLMTIAFTLATTWF). Residues 506 to 529 (RRNKLNLPGPLKKITGFNAFWYSH) lie on the Cytoplasmic side of the membrane. A helical transmembrane segment spans residues 530 to 550 (HLFVIVYSLLVVHGFYVYLII). At 551–709 (EPWYKKTTWM…PAQDYKKFEV (159 aa)) the chain is on the extracellular side. Residues 575 to 703 (IRAFRSSVEA…DGPYGAPAQD (129 aa)) enclose the FAD-binding FR-type domain. Residues 710 to 730 (VLLVGLGIGATPMISIVSDII) traverse the membrane as a helical segment. The Cytoplasmic segment spans residues 731-902 (NNLKGVEEGS…TKFIFHKENF (172 aa)). Positions 738 to 760 (EGSNRRQSPIHNMVTPPVSPSRK) are disordered.

This sequence belongs to the RBOH (TC 5.B.1.3) family. As to quaternary structure, monomer and homodimer.

Its subcellular location is the membrane. In terms of biological role, calcium-dependent NADPH oxidase that generates superoxide. The sequence is that of Respiratory burst oxidase homolog protein A (RBOHA) from Arabidopsis thaliana (Mouse-ear cress).